Consider the following 143-residue polypeptide: Large ribosomal subunit protein uL11 (143 aa).

The protein belongs to the universal ribosomal protein uL11 family. In terms of assembly, part of the ribosomal stalk of the 50S ribosomal subunit. Interacts with L10 and the large rRNA to form the base of the stalk. L10 forms an elongated spine to which L12 dimers bind in a sequential fashion forming a multimeric L10(L12)X complex. In terms of processing, one or more lysine residues are methylated.

In terms of biological role, forms part of the ribosomal stalk which helps the ribosome interact with GTP-bound translation factors. This Delftia acidovorans (strain DSM 14801 / SPH-1) protein is Large ribosomal subunit protein uL11.